Here is a 158-residue protein sequence, read N- to C-terminus: Large ribosomal subunit protein uL15 (158 aa).

Residues 1–13 are compositionally biased toward basic and acidic residues; the sequence is MKLNEIKDNEGST. Residues 1-44 form a disordered region; the sequence is MKLNEIKDNEGSTHSRKRLGRGIGSGSGKTAGRGVKGQKSRSGV. Gly residues predominate over residues 21-35; the sequence is RGIGSGSGKTAGRGV.

The protein belongs to the universal ribosomal protein uL15 family. As to quaternary structure, part of the 50S ribosomal subunit.

Binds to the 23S rRNA. This is Large ribosomal subunit protein uL15 from Rhizobium etli (strain ATCC 51251 / DSM 11541 / JCM 21823 / NBRC 15573 / CFN 42).